The sequence spans 307 residues: Type 2A encapsulin shell protein (307 aa).

Belongs to the encapsulin family. Family 2A subfamily. As to quaternary structure, homooligomeric. The encapsulin nanocompartment is formed by 60 subunits; monomers form pentamers which assemble to form shells. There are 12 charged pores where the pentamers meet as well as 3-fold axis channels and dimer channels. The N-terminus is blocked.

Its subcellular location is the encapsulin nanocompartment. The protein resides in the cytoplasm. The protein localises to the cytosol. It is found in the cell membrane. Its function is as follows. Shell component of a type 2A encapsulin nanocompartment. Forms encapsulin nanocompartments about 24 nm in diameter from 60 monomers. Probably encapsulates at least cysteine desulfurase (CyD, AC O32975) and allows passage of cysteine into its interior, probably involved in sulfur metabolism. Expression in M.smegmatis generates a multimeric protein, whereas expression in E.coli does not. This chain is Type 2A encapsulin shell protein, found in Mycobacterium leprae (strain TN).